Consider the following 564-residue polypeptide: MFS-type transporter grgE (564 aa).

A compositionally biased stretch (basic and acidic residues) spans 1–10 (MAENQVDPKR). Residues 1 to 52 (MAENQVDPKRNLPLYGAADESTSATDKEDEVENVRQNGSAPPIEEARESNEA) are disordered. An N-linked (GlcNAc...) asparagine glycan is attached at N37. 7 helical membrane passes run 60–80 (HGLS…IISL), 101–118 (KVSW…GFQT), 131–151 (TTFL…GVAP), 161–181 (AIAG…IAFS), 192–212 (GLVG…GGAF), 220–240 (WCFY…LIFF), and 262–282 (LVGV…LQYG). N289 carries N-linked (GlcNAc...) asparagine glycosylation. 7 helical membrane passes run 293–313 (VIGL…WEYY), 329–349 (ALWA…ILLY), 368–388 (VRNL…GAFV), 392–412 (GIAT…TGLI), 425–445 (IGYQ…PMNI), 462–482 (IFLA…SAFV), and 531–551 (TFAI…FTPW).

This sequence belongs to the major facilitator superfamily.

It is found in the membrane. Functionally, MFS-type transporter; part of the gene cluster that mediates the biosynthesis of gregatin A, a fungal polyketide featuring an alkylated furanone core. The chain is MFS-type transporter grgE from Penicillium sp.